A 139-amino-acid chain; its full sequence is Acyl carrier protein 4, chloroplastic (139 aa).

Residues 1–55 constitute a chloroplast transit peptide; that stretch reads MASAAAGASICIKSASCSPLAPGRISSLRSVSLPVSRKSFPSLRSSKGSFARVSC. A Carrier domain is found at 59 to 134; that stretch reads PETVAKVCRI…DAADLIEKLM (76 aa). Position 94 is an O-(pantetheine 4'-phosphoryl)serine (Ser-94).

The protein belongs to the acyl carrier protein (ACP) family. Post-translationally, 4'-phosphopantetheine is transferred from CoA to a specific serine of apo-ACP by acpS. This modification is essential for activity because fatty acids are bound in thioester linkage to the sulfhydryl of the prosthetic group.

It localises to the plastid. The protein resides in the chloroplast. It participates in lipid metabolism; fatty acid biosynthesis. In terms of biological role, carrier of the growing fatty acid chain in fatty acid biosynthesis. In Cuphea lanceolata (Cigar flower), this protein is Acyl carrier protein 4, chloroplastic (ACL1).